Consider the following 67-residue polypeptide: Large ribosomal subunit protein bL35 (67 aa).

Belongs to the bacterial ribosomal protein bL35 family.

This Rhizobium etli (strain CIAT 652) protein is Large ribosomal subunit protein bL35.